The following is a 995-amino-acid chain: S1 RNA-binding domain-containing protein 1 (995 aa).

Positions 23 to 81 are disordered; it reads SFSELSSASEEDDKEDSAWEPQKKVPRSRKQPPPKESKPKRMPRVKKNAPQISDGSEVV. Glycyl lysine isopeptide (Lys-Gly) (interchain with G-Cter in SUMO2) cross-links involve residues lysine 84 and lysine 134. Residues 120 to 165 are disordered; it reads CAAQPHTVRRTKKLKVEEETSKASNLEGESNSSETPSTSTVWGGTC. The span at 146–159 shows a compositional bias: low complexity; sequence EGESNSSETPSTST. Glycyl lysine isopeptide (Lys-Gly) (interchain with G-Cter in SUMO2) cross-links involve residues lysine 166, lysine 167, and lysine 183. A Glycyl lysine isopeptide (Lys-Gly) (interchain with G-Cter in SUMO1); alternate cross-link involves residue lysine 185. Lysine 185 participates in a covalent cross-link: Glycyl lysine isopeptide (Lys-Gly) (interchain with G-Cter in SUMO2); alternate. A coiled-coil region spans residues 258-288; it reads ADSLREVQQTLEELRAVAKKVHSTIQKIKKE. Serine 861 carries the post-translational modification Phosphoserine. The S1 motif domain occupies 919–992; it reads GTVLTGKVEN…PRSRITLDLI (74 aa). Lysine 955 participates in a covalent cross-link: Glycyl lysine isopeptide (Lys-Gly) (interchain with G-Cter in SUMO2). Serine 964 is subject to Phosphoserine.

The protein is S1 RNA-binding domain-containing protein 1 (SRBD1) of Homo sapiens (Human).